Here is a 363-residue protein sequence, read N- to C-terminus: Ribonuclease P protein subunit p40 (363 aa).

In terms of assembly, component of nuclear RNase P and RNase MRP ribonucleoproteins. RNase P consists of a catalytic RNA moiety and about 10 protein subunits; POP1, POP4, POP5, POP7, RPP14, RPP21, RPP25, RPP30, RPP38 and RPP40. Within the RNase P complex, POP1, POP7 and RPP25 form the 'finger' subcomplex, POP5, RPP14, RPP40 and homodimeric RPP30 form the 'palm' subcomplex, and RPP21, POP4 and RPP38 form the 'wrist' subcomplex. All subunits of the RNase P complex interact with the catalytic RNA. Several subunits of RNase P are also part of the RNase MRP complex. RNase MRP consists of a catalytic RNA moiety and about 8 protein subunits; POP1, POP7, RPP25, RPP30, RPP38, RPP40 and possibly also POP4 and POP5.

The protein resides in the nucleus. The protein localises to the nucleolus. Its function is as follows. Component of ribonuclease P, a ribonucleoprotein complex that generates mature tRNA molecules by cleaving their 5'-ends. Also a component of the MRP ribonuclease complex, which cleaves pre-rRNA sequences. The sequence is that of Ribonuclease P protein subunit p40 (Rpp40) from Mus musculus (Mouse).